We begin with the raw amino-acid sequence, 219 residues long: Large ribosomal subunit protein uL3 (219 aa).

Over residues 133–145 (GRASHGNSRSHNV) the composition is skewed to polar residues. Positions 133-153 (GRASHGNSRSHNVPGSIGMAQ) are disordered. Residue Gln153 is modified to N5-methylglutamine.

Belongs to the universal ribosomal protein uL3 family. As to quaternary structure, part of the 50S ribosomal subunit. Forms a cluster with proteins L14 and L19. Methylated by PrmB.

In terms of biological role, one of the primary rRNA binding proteins, it binds directly near the 3'-end of the 23S rRNA, where it nucleates assembly of the 50S subunit. The chain is Large ribosomal subunit protein uL3 from Paraburkholderia phymatum (strain DSM 17167 / CIP 108236 / LMG 21445 / STM815) (Burkholderia phymatum).